Here is a 1166-residue protein sequence, read N- to C-terminus: Reverse gyrase (1166 aa).

The RG N-terminal-type zinc-finger motif lies at 1–40; it reads MINVMYKNSCPNCGGDISADRLLNGLPCETCLPYINGIDG. Zn(2+) is bound by residues Cys10, Cys13, Cys28, and Cys31. ATP-binding positions include Gln92 and 109–116; that span reads APTGLGKT. The Helicase ATP-binding domain occupies 96–285; it reads LRRLVSNQSF…ALRLLTGFEP (190 aa). The DEAD box signature appears at 190–193; sequence DDAD. The topoisomerase I stretch occupies residues 576 to 1166; that stretch reads FNISTGLLIV…VNPLKSEQNV (591 aa). A Toprim domain is found at 580–743; sequence TGLLIVESPT…NIYRITYHEI (164 aa). Glu586 serves as a coordination point for Mg(2+). The RG C-terminal-type zinc-finger motif lies at 662 to 689; that stretch reads IKKCLDCNKTFSIASDKCPYCGSTNVQT. Zn(2+) contacts are provided by Cys665, Cys668, Cys679, and Cys682. Residue Asp712 participates in Mg(2+) binding. The Topo IA-type catalytic domain occupies 759–1157; it reads NTNLVMSQIV…EIFSEISTLV (399 aa). Tyr903 acts as the O-(5'-phospho-DNA)-tyrosine intermediate in catalysis.

This sequence in the N-terminal section; belongs to the DEAD box helicase family. DDVD subfamily. The protein in the C-terminal section; belongs to the type IA topoisomerase family. In terms of assembly, monomer. It depends on Zn(2+) as a cofactor. Requires Mg(2+) as cofactor.

The protein localises to the cytoplasm. The catalysed reaction is ATP + H2O = ADP + phosphate + H(+). Its activity is regulated as follows. Inhibited by UV light-induced lesions; substrate is completely cleaved but a nicked form accumulates, suggesting the reaction is blocked between the cleavage and ligation steps. Inhibited by actinomycin D; substrate DNA remains negatively supercoiled in this case. Activity is stimulated by SSB from S.solfataricus strain P2. Positive supercoiling is inhibited by Sul7d (also called Sso7d) from S.solfataricus strain MT4; SSB from S.solfataricus strain P2 relieves this inhibition. Modifies the topological state of DNA by introducing positive supercoils in an ATP-dependent process. Increases the linking number in steps of +1. In vitro requires high concentrations to supercoil negatively supercoiled DNA, relaxes plasmid DNA first; DNA single-strand binding protein (SSB) from S.solfataricus strain P2 stimulates positive supercoiling. SSB stimulates DNA-binding by reverse gyrase, and thus all subsequent steps. Binds to single-stranded DNA, transiently cleaves and then rejoins the ends, introducing a positive supercoil in the process. The scissile phosphodiester is attacked by the catalytic tyrosine of the enzyme, resulting in the formation of a DNA-(5'-phosphotyrosyl)-enzyme intermediate. May be involved in DNA damage response. Probably involved in rewinding DNA strands in regions of the chromosome that have opened up to allow replication, transcription, DNA repair and/or for DNA protection. This chain is Reverse gyrase, found in Saccharolobus shibatae (strain ATCC 51178 / DSM 5389 / JCM 8931 / NBRC 15437 / B12) (Sulfolobus shibatae).